Reading from the N-terminus, the 490-residue chain is ATP synthase subunit beta, chloroplastic (490 aa).

170 to 177 serves as a coordination point for ATP; sequence GGAGVGKT.

Belongs to the ATPase alpha/beta chains family. F-type ATPases have 2 components, CF(1) - the catalytic core - and CF(0) - the membrane proton channel. CF(1) has five subunits: alpha(3), beta(3), gamma(1), delta(1), epsilon(1). CF(0) has four main subunits: a(1), b(1), b'(1) and c(9-12).

Its subcellular location is the plastid. The protein resides in the chloroplast thylakoid membrane. It catalyses the reaction ATP + H2O + 4 H(+)(in) = ADP + phosphate + 5 H(+)(out). Produces ATP from ADP in the presence of a proton gradient across the membrane. The catalytic sites are hosted primarily by the beta subunits. The sequence is that of ATP synthase subunit beta, chloroplastic from Ipomoea setosa (Brazilian morning glory).